Here is a 353-residue protein sequence, read N- to C-terminus: Photosystem II D2 protein (353 aa).

The residue at position 2 (Thr2) is an N-acetylthreonine. Position 2 is a phosphothreonine (Thr2). Residues Cys41–Thr61 form a helical membrane-spanning segment. His118 is a chlorophyll a binding site. A helical transmembrane segment spans residues Gly125 to Pro141. The pheophytin a site is built by Gln130 and Asn143. A helical membrane pass occupies residues Val153–Ser166. Residue His198 participates in chlorophyll a binding. A helical transmembrane segment spans residues Ala208–Asp228. A plastoquinone is bound by residues His215 and Phe262. His215 is a binding site for Fe cation. Residue His269 coordinates Fe cation. A helical transmembrane segment spans residues Gly279 to Arg295.

Belongs to the reaction center PufL/M/PsbA/D family. PSII is composed of 1 copy each of membrane proteins PsbA, PsbB, PsbC, PsbD, PsbE, PsbF, PsbH, PsbI, PsbJ, PsbK, PsbL, PsbM, PsbT, PsbX, PsbY, PsbZ, Psb30/Ycf12, at least 3 peripheral proteins of the oxygen-evolving complex and a large number of cofactors. It forms dimeric complexes. The cofactor is The D1/D2 heterodimer binds P680, chlorophylls that are the primary electron donor of PSII, and subsequent electron acceptors. It shares a non-heme iron and each subunit binds pheophytin, quinone, additional chlorophylls, carotenoids and lipids. There is also a Cl(-1) ion associated with D1 and D2, which is required for oxygen evolution. The PSII complex binds additional chlorophylls, carotenoids and specific lipids..

Its subcellular location is the plastid. It localises to the chloroplast thylakoid membrane. It catalyses the reaction 2 a plastoquinone + 4 hnu + 2 H2O = 2 a plastoquinol + O2. Its function is as follows. Photosystem II (PSII) is a light-driven water:plastoquinone oxidoreductase that uses light energy to abstract electrons from H(2)O, generating O(2) and a proton gradient subsequently used for ATP formation. It consists of a core antenna complex that captures photons, and an electron transfer chain that converts photonic excitation into a charge separation. The D1/D2 (PsbA/PsbD) reaction center heterodimer binds P680, the primary electron donor of PSII as well as several subsequent electron acceptors. D2 is needed for assembly of a stable PSII complex. The sequence is that of Photosystem II D2 protein from Cicer arietinum (Chickpea).